We begin with the raw amino-acid sequence, 361 residues long: Zinc transporter ZIP13 (361 aa).

Topologically, residues 1–6 are lumenal; that stretch reads MPGCPC. Residues 7 to 27 traverse the membrane as a helical segment; sequence PGCGMAGQRLLFLTVLALELL. Residues 28–68 are Cytoplasmic-facing; sequence ERAGGSQPALRSLGAAAACRLDSKESESWGALLSGERLDTW. Residues 69–89 form a helical membrane-spanning segment; sequence ICSLLGSLMVGLSGVFPLLVI. The Lumenal portion of the chain corresponds to 90-108; the sequence is PLEMGTMLQSEAGAWRLKQ. A helical membrane pass occupies residues 109-129; that stretch reads LLSFALGGLLGNVFLHLLPEA. The Cytoplasmic segment spans residues 130 to 150; the sequence is WAYTCNISPGVEGQSLQRQQQ. Residues 151–171 traverse the membrane as a helical segment; the sequence is LGLWVIAGFLTFLALEKMFLN. Topologically, residues 172–233 are lumenal; it reads CKEEDPSQAP…TIDNFTHGLA (62 aa). The helical transmembrane segment at 234–254 threads the bilayer; it reads VAASFLVSKKIGLLTTMAILL. The XEXPHE-motif motif lies at 255–260; it reads HEIPHE. The Cytoplasmic portion of the chain corresponds to 255 to 276; it reads HEIPHEVGDFAILLRAGFDRWT. A helical transmembrane segment spans residues 277 to 297; the sequence is AAKLQFSTALGGLLGACFAIC. At 298–307 the chain is on the lumenal side; the sequence is TQSPKGVEET. The helical transmembrane segment at 308–328 threads the bilayer; that stretch reads VVWTLPFTSGGFLYVALVNVL. The Cytoplasmic portion of the chain corresponds to 329–340; sequence PDLLEEDDPWHL. The chain crosses the membrane as a helical span at residues 341 to 361; it reads NPPLPTGTPCSRCCCSAPVSW.

Belongs to the ZIP transporter (TC 2.A.5) family. As to quaternary structure, homodimer.

It localises to the golgi apparatus membrane. The protein localises to the cytoplasmic vesicle membrane. Its subcellular location is the endoplasmic reticulum membrane. The catalysed reaction is Zn(2+)(in) = Zn(2+)(out). Functions as a zinc transporter transporting Zn(2+) from the Golgi apparatus to the cytosol and thus influences the zinc level at least in areas of the cytosol. May regulate beige adipocyte differentiation. In Rattus norvegicus (Rat), this protein is Zinc transporter ZIP13.